The chain runs to 309 residues: uncharacterized protein (309 aa).

The protein belongs to the OprB family.

This is an uncharacterized protein from Aquifex aeolicus (strain VF5).